The chain runs to 513 residues: ATP synthase subunit alpha (513 aa).

169–176 serves as a coordination point for ATP; sequence GDRQTGKT.

It belongs to the ATPase alpha/beta chains family. In terms of assembly, F-type ATPases have 2 components, CF(1) - the catalytic core - and CF(0) - the membrane proton channel. CF(1) has five subunits: alpha(3), beta(3), gamma(1), delta(1), epsilon(1). CF(0) has three main subunits: a(1), b(2) and c(9-12). The alpha and beta chains form an alternating ring which encloses part of the gamma chain. CF(1) is attached to CF(0) by a central stalk formed by the gamma and epsilon chains, while a peripheral stalk is formed by the delta and b chains.

Its subcellular location is the cell inner membrane. It catalyses the reaction ATP + H2O + 4 H(+)(in) = ADP + phosphate + 5 H(+)(out). In terms of biological role, produces ATP from ADP in the presence of a proton gradient across the membrane. The alpha chain is a regulatory subunit. This is ATP synthase subunit alpha from Haemophilus influenzae (strain ATCC 51907 / DSM 11121 / KW20 / Rd).